The following is a 755-amino-acid chain: Polyribonucleotide nucleotidyltransferase (755 aa).

Mg(2+) contacts are provided by aspartate 493 and aspartate 499. The KH domain occupies 560–619 (PRIMTIQIPVDKIGALIGPGGKTIRNICDTTGAQIDIEDDGRVFITAPDGEAAKKAISMI). The S1 motif domain maps to 629-698 (GDIFLGKVVS…NTGKISLSRR (70 aa)). Residues 704–755 (ETPEARKAAGAAPRPRPREEQRGGREEPRSLREELRGPRRDGERPRPRRRDD) form a disordered region. The segment covering 719–755 (RPREEQRGGREEPRSLREELRGPRRDGERPRPRRRDD) has biased composition (basic and acidic residues).

The protein belongs to the polyribonucleotide nucleotidyltransferase family. Requires Mg(2+) as cofactor.

Its subcellular location is the cytoplasm. The catalysed reaction is RNA(n+1) + phosphate = RNA(n) + a ribonucleoside 5'-diphosphate. Involved in mRNA degradation. Catalyzes the phosphorolysis of single-stranded polyribonucleotides processively in the 3'- to 5'-direction. The sequence is that of Polyribonucleotide nucleotidyltransferase from Chloroflexus aggregans (strain MD-66 / DSM 9485).